The primary structure comprises 340 residues: Fructoselysine 6-phosphate deglycase (340 aa).

SIS domains lie at I35 to P169 and L201 to R331.

As to quaternary structure, homododecamer.

It carries out the reaction N(6)-(6-phospho-D-fructosyl)-L-lysine + H2O = D-glucose 6-phosphate + L-lysine. Its pathway is carbohydrate metabolism; fructoselysine degradation; D-glucose 6-phosphate and lysine from fructoselysine: step 2/2. Its function is as follows. Catalyzes the reversible conversion of fructoselysine 6-phosphate to glucose 6-phosphate and lysine. Functions in a fructoselysine degradation pathway that allows E.coli to grow on fructoselysine or psicoselysine. The polypeptide is Fructoselysine 6-phosphate deglycase (frlB) (Escherichia coli O157:H7).